The following is a 228-amino-acid chain: Ribonuclease 3 (228 aa).

In terms of domain architecture, RNase III spans 7-132; the sequence is LSAFMDRLGH…VIAAVYLDAG (126 aa). A Mg(2+)-binding site is contributed by E45. Residue D49 is part of the active site. 2 residues coordinate Mg(2+): D118 and E121. E121 is a catalytic residue. The DRBM domain maps to 157–226; it reads DPKTALQEWA…AKALLERLER (70 aa).

The protein belongs to the ribonuclease III family. In terms of assembly, homodimer. It depends on Mg(2+) as a cofactor.

The protein localises to the cytoplasm. The enzyme catalyses Endonucleolytic cleavage to 5'-phosphomonoester.. Digests double-stranded RNA. Involved in the processing of ribosomal RNA precursors and of some mRNAs. Complements an E.coli disruption mutant, but the E.coli enzyme does not cleave R.capsulatus rRNA precursor, showing substrate recognition is different. Probably also processes some mRNAs, and tRNAs when they are encoded in the rRNA operon. Probably processes pre-crRNA and tracrRNA of type II CRISPR loci if present in the organism. The sequence is that of Ribonuclease 3 (rnc) from Rhodobacter capsulatus (Rhodopseudomonas capsulata).